The chain runs to 121 residues: MTNYRSGRINEEMKREISNIIRNDMKDPRLSAMVSVTKVDVTKDQKYAKVFVSIYGEDKSKDDTFQVLKSSESFIRREVGHRVKLRNTPEIIIEMDNTIEYGMHINELLHKIKENEKHDNE.

This sequence belongs to the RbfA family. As to quaternary structure, monomer. Binds 30S ribosomal subunits, but not 50S ribosomal subunits or 70S ribosomes.

It localises to the cytoplasm. One of several proteins that assist in the late maturation steps of the functional core of the 30S ribosomal subunit. Associates with free 30S ribosomal subunits (but not with 30S subunits that are part of 70S ribosomes or polysomes). Required for efficient processing of 16S rRNA. May interact with the 5'-terminal helix region of 16S rRNA. In Clostridium kluyveri (strain NBRC 12016), this protein is Ribosome-binding factor A.